Here is a 312-residue protein sequence, read N- to C-terminus: Ornithine carbamoyltransferase (312 aa).

Residues 59–62, Q86, R110, and 137–140 each bind carbamoyl phosphate; these read STRT and HPCQ. L-ornithine contacts are provided by residues N167, D231, and 235–236; that span reads SM. The carbamoyl phosphate site is built by C271 and R299.

Belongs to the aspartate/ornithine carbamoyltransferase superfamily. OTCase family.

It is found in the cytoplasm. The catalysed reaction is carbamoyl phosphate + L-ornithine = L-citrulline + phosphate + H(+). It functions in the pathway amino-acid biosynthesis; L-arginine biosynthesis; L-arginine from L-ornithine and carbamoyl phosphate: step 1/3. Functionally, reversibly catalyzes the transfer of the carbamoyl group from carbamoyl phosphate (CP) to the N(epsilon) atom of ornithine (ORN) to produce L-citrulline. In Methanopyrus kandleri (strain AV19 / DSM 6324 / JCM 9639 / NBRC 100938), this protein is Ornithine carbamoyltransferase.